The following is a 1086-amino-acid chain: Tudor domain-containing protein 7 (1086 aa).

2 HTH OST-type domains span residues 3-76 and 222-291; these read EADL…YAVA and KMDE…YPAR. A compositionally biased stretch (basic and acidic residues) spans 295–306; sequence PLKSDQDPEKEL. The interval 295-324 is disordered; that stretch reads PLKSDQDPEKELPPPPPAPKQEVPSQGSPA. In terms of domain architecture, HTH OST-type 3 spans 325-394; it reads VMPDVKEKVA…TQKAILYAKL (70 aa). Tudor domains lie at 501-558 and 691-748; these read TVHV…FCSL and LPFC…FLQE. The interval 844–866 is disordered; that stretch reads AASSPGNRNGGTPAPGSPAESLR. The residue at position 847 (Ser-847) is a Phosphoserine. The interaction with CDK17 stretch occupies residues 849–1086; sequence GNRNGGTPAP…QYLLELSKVN (238 aa). Residues 881 to 1086 are interaction with CABLES1; that stretch reads TSSFSLEELP…QYLLELSKVN (206 aa).

It belongs to the TDRD7 family. Found in a mRNP complex, at least composed of TDRD1, TDRD6, TDRD7 and DDX4. Found in a complex containing CABLES1, CDK16 and CDK17. Interacts with CABLES1, CDK17 and PIWIL1. Mainly expressed in testis. Expressed in spermatogonia, spermatocytes and round spermatids (at protein level). Also expressed in the developing lens.

Its subcellular location is the cytoplasm. Component of specific cytoplasmic RNA granules involved in post-transcriptional regulation of specific genes: probably acts by binding to specific mRNAs and regulating their translation. Required for lens transparency during lens development, by regulating translation of genes such as CRYBB3 and HSPB1 in the developing lens. Also required during spermatogenesis. This is Tudor domain-containing protein 7 (Tdrd7) from Mus musculus (Mouse).